The sequence spans 240 residues: Probable transcriptional regulatory protein Adeh_2184 (240 aa).

The protein belongs to the TACO1 family.

Its subcellular location is the cytoplasm. The polypeptide is Probable transcriptional regulatory protein Adeh_2184 (Anaeromyxobacter dehalogenans (strain 2CP-C)).